The following is a 71-amino-acid chain: uncharacterized protein (71 aa).

It is found in the mitochondrion matrix. The protein localises to the kinetoplast. This is an uncharacterized protein from Trypanosoma brucei brucei.